A 360-amino-acid chain; its full sequence is Histidinol-phosphate aminotransferase 2 (360 aa).

Lysine 218 is modified (N6-(pyridoxal phosphate)lysine).

The protein belongs to the class-II pyridoxal-phosphate-dependent aminotransferase family. Histidinol-phosphate aminotransferase subfamily. In terms of assembly, homodimer. Pyridoxal 5'-phosphate is required as a cofactor.

The enzyme catalyses L-histidinol phosphate + 2-oxoglutarate = 3-(imidazol-4-yl)-2-oxopropyl phosphate + L-glutamate. Its pathway is amino-acid biosynthesis; L-histidine biosynthesis; L-histidine from 5-phospho-alpha-D-ribose 1-diphosphate: step 7/9. The polypeptide is Histidinol-phosphate aminotransferase 2 (Nitrosococcus oceani (strain ATCC 19707 / BCRC 17464 / JCM 30415 / NCIMB 11848 / C-107)).